The chain runs to 416 residues: MSYLEKQDPEVYAALKKEDERQEHSLEMIASENFVSRPVLEAYHSTLTNKYAEGYPGKRYYNGCENADRVEELAIERAKKMFGAEYANVQPHSGAQANMAVFLATLEPGDSFLGMNLAHGGHLTHGSAVNISGKYFKPIPYGVDEKTETINYDEVAKLAKEHKPKLIVVGASAYPRVIDFNKFREIADGIGAKIMADIAHISGLVVAGEHPSPIGVCDFVTTTTHKTLRGPRGGLILSSSEHEKILNSRVFPGIQGGPLMHVIAAKAVAFGEALQPDFKTYIKQVVKNAKTLAEVFQKRGFRVVSGGTDNHIVLLDVSVKGLTGKDAADGLDHIGVTVNKNAIPFDKNPPAVASGIRLGTPALTTRGLKEKEIEAVGNLICDYLEHFGDTSFESKVKAAVKEITGAFPMNHFRLED.

(6S)-5,6,7,8-tetrahydrofolate-binding positions include Leu-117 and 121–123 (GHL). An N6-(pyridoxal phosphate)lysine modification is found at Lys-226.

It belongs to the SHMT family. Homodimer. The cofactor is pyridoxal 5'-phosphate.

It localises to the cytoplasm. The enzyme catalyses (6R)-5,10-methylene-5,6,7,8-tetrahydrofolate + glycine + H2O = (6S)-5,6,7,8-tetrahydrofolate + L-serine. It participates in one-carbon metabolism; tetrahydrofolate interconversion. The protein operates within amino-acid biosynthesis; glycine biosynthesis; glycine from L-serine: step 1/1. Functionally, catalyzes the reversible interconversion of serine and glycine with tetrahydrofolate (THF) serving as the one-carbon carrier. This reaction serves as the major source of one-carbon groups required for the biosynthesis of purines, thymidylate, methionine, and other important biomolecules. Also exhibits THF-independent aldolase activity toward beta-hydroxyamino acids, producing glycine and aldehydes, via a retro-aldol mechanism. The polypeptide is Serine hydroxymethyltransferase (Leptospira biflexa serovar Patoc (strain Patoc 1 / Ames)).